A 397-amino-acid polypeptide reads, in one-letter code: Chorismate synthase (397 aa).

NADP(+) is bound by residues R40 and R46. FMN is bound by residues 129 to 131, 257 to 258, G302, 317 to 321, and R343; these read RAS, QA, and KPIAT.

Belongs to the chorismate synthase family. As to quaternary structure, homotetramer. The cofactor is FMNH2.

It carries out the reaction 5-O-(1-carboxyvinyl)-3-phosphoshikimate = chorismate + phosphate. It participates in metabolic intermediate biosynthesis; chorismate biosynthesis; chorismate from D-erythrose 4-phosphate and phosphoenolpyruvate: step 7/7. In terms of biological role, catalyzes the anti-1,4-elimination of the C-3 phosphate and the C-6 proR hydrogen from 5-enolpyruvylshikimate-3-phosphate (EPSP) to yield chorismate, which is the branch point compound that serves as the starting substrate for the three terminal pathways of aromatic amino acid biosynthesis. This reaction introduces a second double bond into the aromatic ring system. The polypeptide is Chorismate synthase (Chlorobium phaeobacteroides (strain BS1)).